Consider the following 698-residue polypeptide: Probable Xaa-Pro aminopeptidase P (698 aa).

Mn(2+)-binding residues include aspartate 509, aspartate 520, glutamate 604, and glutamate 618.

Belongs to the peptidase M24B family. Mn(2+) is required as a cofactor.

The catalysed reaction is Release of any N-terminal amino acid, including proline, that is linked to proline, even from a dipeptide or tripeptide.. In terms of biological role, catalyzes the removal of a penultimate prolyl residue from the N-termini of peptides. The chain is Probable Xaa-Pro aminopeptidase P (AMPP) from Trichophyton verrucosum (strain HKI 0517).